We begin with the raw amino-acid sequence, 578 residues long: Type I restriction enzyme MjaVIII methylase subunit (578 aa).

S-adenosyl-L-methionine-binding positions include glutamate 250–isoleucine 255, serine 280–serine 282, glutamate 303, and aspartate 332–serine 333.

The protein belongs to the N(4)/N(6)-methyltransferase family. As to quaternary structure, the type I restriction/modification system is composed of three polypeptides R, M and S.

The enzyme catalyses a 2'-deoxyadenosine in DNA + S-adenosyl-L-methionine = an N(6)-methyl-2'-deoxyadenosine in DNA + S-adenosyl-L-homocysteine + H(+). The subtype gamma methyltransferase (M) subunit of a type I restriction enzyme. The M and S subunits together form a methyltransferase (MTase) that methylates A-2 on the top and A-3 on the bottom strand of the sequence 5'-GAYN(5)GTAA-3'. In the presence of the R subunit the complex can also act as an endonuclease, binding to the same target sequence but cutting the DNA some distance from this site. Whether the DNA is cut or modified depends on the methylation state of the target sequence. When the target site is unmodified, the DNA is cut. When the target site is hemimethylated, the complex acts as a maintenance MTase modifying the DNA so that both strands become methylated. After locating a non-methylated recognition site, the enzyme complex serves as a molecular motor that translocates DNA in an ATP-dependent manner until a collision occurs that triggers cleavage. The chain is Type I restriction enzyme MjaVIII methylase subunit from Methanocaldococcus jannaschii (strain ATCC 43067 / DSM 2661 / JAL-1 / JCM 10045 / NBRC 100440) (Methanococcus jannaschii).